Here is a 215-residue protein sequence, read N- to C-terminus: uncharacterized protein (215 aa).

Transmembrane regions (helical) follow at residues 1-21 (MTAE…AIGM), 36-56 (VLIG…FADV), 67-87 (SRIA…NILV), 92-112 (IVGL…MVIG), and 118-138 (LGIY…QLTF).

Belongs to the MgtC/SapB family.

Its subcellular location is the cell inner membrane. This is an uncharacterized protein from Escherichia coli O157:H7.